We begin with the raw amino-acid sequence, 263 residues long: Probable ABC transporter permease protein ycf63 (263 aa).

5 helical membrane-spanning segments follow: residues 43–63 (IVGP…SMVF), 70–89 (EFLY…IAFT), 150–170 (ILSI…AFVM), 188–208 (ISDF…IGFI), and 230–250 (SVVT…YFMF).

It belongs to the MlaE permease family.

The protein resides in the plastid. The protein localises to the chloroplast membrane. Could be part of an ABC transporter complex. This chain is Probable ABC transporter permease protein ycf63 (ycf63), found in Pyropia yezoensis (Susabi-nori).